Consider the following 261-residue polypeptide: Sepiapterin reductase (261 aa).

Residue Met-1 is modified to N-acetylmethionine. 15–21 (GASRGFG) serves as a coordination point for NADP(+). Ser-33 carries the post-translational modification Phosphoserine. 43 to 44 (RS) is a binding site for NADP(+). Ser-46 carries the post-translational modification Phosphoserine. 70–71 (DL) contacts NADP(+). Residues 158–159 (SL) and Tyr-171 each bind substrate. Lys-175 provides a ligand contact to NADP(+). Ser-196 is subject to Phosphoserine. Gly-200 provides a ligand contact to substrate. 202–207 (LDNDMQ) provides a ligand contact to NADP(+). The residue at position 214 (Ser-214) is a Phosphoserine. Lys-222 and Asp-258 together coordinate substrate.

The protein belongs to the sepiapterin reductase family. In terms of assembly, homodimer.

The protein resides in the cytoplasm. The catalysed reaction is L-erythro-7,8-dihydrobiopterin + NADP(+) = L-sepiapterin + NADPH + H(+). The enzyme catalyses (6R)-L-erythro-5,6,7,8-tetrahydrobiopterin + 2 NADP(+) = 6-pyruvoyl-5,6,7,8-tetrahydropterin + 2 NADPH + 2 H(+). Functionally, catalyzes the final one or two reductions in tetra-hydrobiopterin biosynthesis to form 5,6,7,8-tetrahydrobiopterin. The chain is Sepiapterin reductase (Spr) from Mus musculus (Mouse).